The primary structure comprises 273 residues: Bis(5'-nucleosyl)-tetraphosphatase, symmetrical (273 aa).

The protein belongs to the Ap4A hydrolase family.

The catalysed reaction is P(1),P(4)-bis(5'-adenosyl) tetraphosphate + H2O = 2 ADP + 2 H(+). In terms of biological role, hydrolyzes diadenosine 5',5'''-P1,P4-tetraphosphate to yield ADP. The protein is Bis(5'-nucleosyl)-tetraphosphatase, symmetrical of Aeromonas hydrophila subsp. hydrophila (strain ATCC 7966 / DSM 30187 / BCRC 13018 / CCUG 14551 / JCM 1027 / KCTC 2358 / NCIMB 9240 / NCTC 8049).